A 264-amino-acid chain; its full sequence is MKILQQDDFGYWLLTQGSNLYLVNNELPFGIAKDIDLEGLQAMQIGEWKNYPLWLVAEQESDEREYVSLSNLLSLPEDEFHILSRGVEINHFLKTHKFCGKCGHKTQQTQDELAVQCIHCGYQTYPVICPSIIVAVRRGHEILLANHKRHYSPNGGIYTTLAGFVEVGETFEQAVQREVFEETGISIKNLRYFGSQPWAFPNSQMVGFLADYESGEITLQESEIHDAQWFSYDQPLPELPPTGTIARKLIHVTLELCKAEHKCD.

The Zn(2+) site is built by Cys-99 and Cys-102. Residue Glu-112 coordinates substrate. Cys-117 and Cys-120 together coordinate Zn(2+). Tyr-125 provides a ligand contact to substrate. The Nudix hydrolase domain maps to 126–253; that stretch reads PVICPSIIVA…TIARKLIHVT (128 aa). Ala-162, Glu-178, and Glu-182 together coordinate a divalent metal cation. Positions 163–184 match the Nudix box motif; sequence GFVEVGETFEQAVQREVFEETG. 196 to 203 contributes to the substrate binding site; it reads QPWAFPNS. Residue Glu-223 participates in a divalent metal cation binding. Substrate is bound at residue Ala-246.

The protein belongs to the Nudix hydrolase family. NudC subfamily. Homodimer. Requires Mg(2+) as cofactor. It depends on Mn(2+) as a cofactor. The cofactor is Zn(2+).

It catalyses the reaction a 5'-end NAD(+)-phospho-ribonucleoside in mRNA + H2O = a 5'-end phospho-adenosine-phospho-ribonucleoside in mRNA + beta-nicotinamide D-ribonucleotide + 2 H(+). The enzyme catalyses NAD(+) + H2O = beta-nicotinamide D-ribonucleotide + AMP + 2 H(+). The catalysed reaction is NADH + H2O = reduced beta-nicotinamide D-ribonucleotide + AMP + 2 H(+). Its function is as follows. mRNA decapping enzyme that specifically removes the nicotinamide adenine dinucleotide (NAD) cap from a subset of mRNAs by hydrolyzing the diphosphate linkage to produce nicotinamide mononucleotide (NMN) and 5' monophosphate mRNA. The NAD-cap is present at the 5'-end of some mRNAs and stabilizes RNA against 5'-processing. Has preference for mRNAs with a 5'-end purine. Catalyzes the hydrolysis of a broad range of dinucleotide pyrophosphates. The chain is NAD-capped RNA hydrolase NudC from Haemophilus influenzae (strain ATCC 51907 / DSM 11121 / KW20 / Rd).